A 1804-amino-acid polypeptide reads, in one-letter code: Collagen alpha-1(XI) chain (1804 aa).

A signal peptide spans 1–34 (MEPWSRWKTKRWIWDLTISTLALTFLFQAREVRG). A propeptide spans 35–511 (AAPVDILKAL…SKGPTISAQE (477 aa)) (N-terminal propeptide). Disulfide bonds link Cys60-Cys242 and Cys181-Cys235. Residues 70–242 (DVAYRVTEEA…DYCDHYSPDC (173 aa)) enclose the Laminin G-like domain. Residues 229–417 (KAAYDYCDHY…DFTETSINGH (189 aa)) are nonhelical region. The segment covering 315 to 329 (YQTETPRRVSGSNEP) has biased composition (polar residues). 2 disordered regions span residues 315-334 (YQTE…PVEE) and 433-506 (EPGM…KGPT). The triple-helical region (interrupted) stretch occupies residues 418–506 (GAYGEKGQKG…YGGDGSKGPT (89 aa)). The Collagen-like 1 domain occupies 440-488 (GPPGPAGPAGLMGPPGLQGPSGLPGDPGDRGPPGRPGLPGADGLPGPPG). 2 stretches are compositionally biased toward low complexity: residues 447–465 (PAGL…LPGD) and 477–494 (LPGA…LMLP). Positions 507-509 (ISA) are short nonhelical segment. The telopeptide stretch occupies residues 510–527 (QEAQAQAILQQARIALRG). Residues 526 to 1567 (RGPPGPMGLT…SIQGDAGDNI (1042 aa)) form a disordered region. Collagen-like domains follow at residues 527–584 (GPPG…GADG) and 567–623 (PPGP…GPPG). Residues 528–1540 (PPGPMGLTGR…PGPPGPPGEV (1013 aa)) are triple-helical region. 2 stretches are compositionally biased toward gly residues: residues 539-548 (GPVGGPGSAG) and 581-590 (GADGGRGMPG). Lys610 carries the allysine modification. Low complexity predominate over residues 639-655 (PRGLPGEAGPRGLLGPR). The segment covering 697–708 (QGLPGPQGPIGP) has biased composition (pro residues). The span at 715 to 726 (QGKPGLAGLPGA) shows a compositional bias: low complexity. The 54-residue stretch at 728–781 (GPPGHPGKEGQSGEKGALGPPGPQGPIGYPGPRGVKGADGVRGLKGSKGEKGED) folds into the Collagen-like 4 domain. The segment covering 805–814 (RGEDGPEGPK) has biased composition (basic and acidic residues). Composition is skewed to low complexity over residues 873–901 (KPGP…PGPK), 916–925 (RGPQGPQGPV), and 969–979 (PQGPTGETGPI). Residues 1040 to 1049 (GLKGGEGPQG) are compositionally biased toward gly residues. Residues 1074 to 1083 (RPGPQGPPGP) show a composition bias toward pro residues. Residues 1084-1108 (AGEKGAPGEKGPQGPAGRDGVQGPV) are compositionally biased toward low complexity. Over residues 1160–1169 (GIAGGDGEPG) the composition is skewed to gly residues. Over residues 1216–1227 (MGPPGPPGPRGP) the composition is skewed to pro residues. Composition is skewed to low complexity over residues 1240-1249 (PGSIGSVGVV) and 1282-1296 (AGPP…IKGP). A compositionally biased stretch (pro residues) spans 1341–1360 (QPGPPGPSGEAGPPGPPGKR). Composition is skewed to low complexity over residues 1383 to 1392 (AEGPPGKTGP) and 1417 to 1426 (QGLPGAAGQD). 2 Collagen-like domains span residues 1427–1482 (GPPG…SPGA) and 1481–1539 (GAKG…PPGE). Positions 1428–1437 (PPGPLGPPGL) are enriched in pro residues. Allysine is present on Lys1450. The span at 1453-1462 (PGLIGLIGPP) shows a compositional bias: low complexity. A compositionally biased stretch (gly residues) spans 1481–1490 (GAKGDGGIPG). Over residues 1491–1507 (PAGPIGPPGPPGLPGPA) the composition is skewed to pro residues. Residues 1509–1519 (PKGNKGSSGPT) are compositionally biased toward low complexity. The segment covering 1528–1537 (PGPPGPPGPP) has biased composition (pro residues). The tract at residues 1541–1561 (IQPLPILSPKKTRRHTESIQG) is nonhelical region (C-terminal). Positions 1562–1804 (DAGDNILDYS…FEVGPACFLG (243 aa)) are cleaved as a propeptide — C-terminal propeptide. One can recognise a Fibrillar collagen NC1 domain in the interval 1575–1803 (EEIFGSLNSL…GFEVGPACFL (229 aa)). Cys1605 and Cys1637 are oxidised to a cystine. Positions 1623, 1625, 1626, 1628, and 1631 each coordinate Ca(2+). N-linked (GlcNAc...) asparagine glycosylation is present at Asn1638. Intrachain disulfides connect Cys1646–Cys1801 and Cys1712–Cys1755.

Belongs to the fibrillar collagen family. Trimers composed of three different chains: alpha 1(XI), alpha 2(XI), and alpha 3(XI). Alpha 3(XI) is a post-translational modification of alpha 1(II). Alpha 1(V) can also be found instead of alpha 3(XI)=1(II). Post-translationally, prolines at the third position of the tripeptide repeating unit (G-X-Y) are hydroxylated in some or all of the chains. In terms of processing, N-glycosylated.

It is found in the secreted. The protein resides in the extracellular space. The protein localises to the extracellular matrix. In terms of biological role, may play an important role in fibrillogenesis by controlling lateral growth of collagen II fibrils. This Mus musculus (Mouse) protein is Collagen alpha-1(XI) chain (Col11a1).